Reading from the N-terminus, the 172-residue chain is Small ribosomal subunit protein bS16 (172 aa).

A disordered region spans residues 125 to 172; it reads KKRKAKEEAEAKAAAEKAAEEAAAAEAAKAEEEAAKAEEADSAEESAE. 2 stretches are compositionally biased toward basic and acidic residues: residues 129 to 144 and 152 to 163; these read AKEEAEAKAAAEKAAE and AKAEEEAAKAEE.

Belongs to the bacterial ribosomal protein bS16 family.

The sequence is that of Small ribosomal subunit protein bS16 from Corynebacterium aurimucosum (strain ATCC 700975 / DSM 44827 / CIP 107346 / CN-1) (Corynebacterium nigricans).